The chain runs to 217 residues: Probable lipoprotein CPn_0875/CP_0994/CPj0875/CpB0904 (217 aa).

A signal peptide spans M1–S21. The N-palmitoyl cysteine moiety is linked to residue C22. C22 is lipidated: S-diacylglycerol cysteine.

It belongs to the chlamydial CPn_0875/CT_734/TC_0107 family.

Its subcellular location is the cell membrane. This chain is Probable lipoprotein CPn_0875/CP_0994/CPj0875/CpB0904, found in Chlamydia pneumoniae (Chlamydophila pneumoniae).